The following is a 183-amino-acid chain: Nucleoplasmin-like protein NO29 (183 aa).

Positions S126–I166 are enriched in acidic residues. The segment at S126–F183 is disordered.

It belongs to the nucleoplasmin family.

The protein localises to the nucleus. It is found in the nucleolus. This Xenopus laevis (African clawed frog) protein is Nucleoplasmin-like protein NO29.